Here is a 317-residue protein sequence, read N- to C-terminus: Iron-uptake system-binding protein (317 aa).

A signal peptide spans Met1–Ala19. Cys20 is lipidated: N-palmitoyl cysteine. Cys20 carries S-diacylglycerol cysteine lipidation. In terms of domain architecture, Fe/B12 periplasmic-binding spans Ile57 to Asn317.

It belongs to the bacterial solute-binding protein 8 family. As to quaternary structure, the complex is composed of one ATP-binding protein (YusV), two transmembrane proteins (FeuB and FeuC) and a solute-binding protein (FeuA).

It localises to the cell membrane. The protein localises to the cytoplasm. It is found in the membrane raft. Involved in the uptake of iron. Its function is as follows. Part of the ABC transporter complex FeuABC/YusV involved in import of the catecholate siderophores bacillibactin and enterobactin. This chain is Iron-uptake system-binding protein (feuA), found in Bacillus subtilis (strain 168).